The sequence spans 467 residues: Hydroxyacid-oxoacid transhydrogenase, mitochondrial (467 aa).

Lysine 445 bears the N6-acetyllysine mark. A Phosphoserine modification is found at serine 452.

The protein belongs to the iron-containing alcohol dehydrogenase family. Hydroxyacid-oxoacid transhydrogenase subfamily.

The protein resides in the mitochondrion. The enzyme catalyses (S)-3-hydroxybutanoate + 2-oxoglutarate = (R)-2-hydroxyglutarate + acetoacetate. It catalyses the reaction 4-hydroxybutanoate + 2-oxoglutarate = (R)-2-hydroxyglutarate + succinate semialdehyde. Its function is as follows. Catalyzes the cofactor-independent reversible oxidation of gamma-hydroxybutyrate (GHB) to succinic semialdehyde (SSA) coupled to reduction of 2-ketoglutarate (2-KG) to D-2-hydroxyglutarate (D-2-HG). L-3-hydroxybutyrate (L-3-OHB) is also a substrate for HOT when using 2-KG as hydrogen acceptor, resulting in the formation of D-2-HG. The polypeptide is Hydroxyacid-oxoacid transhydrogenase, mitochondrial (ADHFE1) (Pongo abelii (Sumatran orangutan)).